A 227-amino-acid polypeptide reads, in one-letter code: DNA mismatch repair protein MutH (227 aa).

It belongs to the MutH family.

It is found in the cytoplasm. Functionally, sequence-specific endonuclease that cleaves unmethylated GATC sequences. It is involved in DNA mismatch repair. This is DNA mismatch repair protein MutH from Vibrio vulnificus (strain CMCP6).